The chain runs to 418 residues: Putative ion-transport protein YfeO (418 aa).

12 helical membrane passes run 10-30, 54-74, 99-119, 120-140, 149-169, 186-206, 223-243, 258-278, 300-320, 322-342, 343-363, and 371-391; these read LLLSLPAVAIGIASSLILIVV, DSPIWIIGVLTLTGIAVGLVI, ALPGLIVALILGLAGGVSLGP, EHPIMTVNIALAVAIGARLLP, ILASAGTIGALFGTPVAAALI, LFAPLMAAAAGALTTGLFFHP, ILSGAIVAAIAIAAGMVAVWC, VLVLGIGGFILGILGVIGGPV, DYFLLAVIKLAALVVAAASGF, GGRIFPAVFVGVALGLMLHEH, VPAVPAAITVSCAILGIVLVV, and LFMAAVVVPNTTLLPLLCIVM.

Belongs to the chloride channel (TC 2.A.49) family.

It localises to the cell membrane. This chain is Putative ion-transport protein YfeO, found in Shigella sonnei (strain Ss046).